The primary structure comprises 542 residues: Chitinase 1 (542 aa).

In terms of domain architecture, GH18 spans 68–506 (FNVLCYFTDW…NAAHEGLKRR (439 aa)). Chitin-binding positions include 186–187 (QE) and 213–216 (GGWS). The active-site Proton donor is E256. Residues Y257, 323 to 326 (MTYD), and W486 each bind chitin.

This sequence belongs to the glycosyl hydrolase 18 family. Semipurified toxin complex consists of at least YenA1-YenA2-YenB-YenC1-YenC2-Chi1-Chi2. The Yen-TC:K9 subcomplex is about 26 nm tall and 22 nm in diameter with 5-fold symmetry and 5 copies of YenA1, YenA2, Chi1 and Chi2; the chitinase subunits may be solvent accessible on the exterior the complex. The Yen-TC:K9 subcomplex has no insecticidal activity. The native complex with additional YenB, YenC1 and YenC2 subunits is 16 nm taller and is insecticidal; the toxicity-conferring subunits are present at about 1 copy each.

It is found in the secreted. The catalysed reaction is Random endo-hydrolysis of N-acetyl-beta-D-glucosaminide (1-&gt;4)-beta-linkages in chitin and chitodextrins.. Toxin complex is secreted when grown at 25 degrees Celsius or less; at higher temperatures the proteins are present intracellularly but not secreted. Functionally, part of an orally active toxin complex (TC) with strong insecticidal effects on larvae of the Coleoptera Costelytra zealandica, Acrossidius tasmania and Adoryphorus couloni and some Lepidoptera larvae. The TC has an endochitinase activity. This subunit might aid infection by degradation of the larval peritrophic membrane. The polypeptide is Chitinase 1 (Yersinia entomophaga).